The primary structure comprises 319 residues: MVPSKANEDFLIANAHAKINLHLEVLGIRSDGFHELAMVMQSINLSDQLKMIKRVDNTINLKSNNKEISNGDDNLIIKAAKLLRNKVENQELGVDIELEKNIPIGAGLAGGSTDAAATLLGLNKLWKLNLKIDELENLSKEIGSDIPFCISGGRQICFGRGEILEKLKFDQIQLGLVLVKDPSIQVSTPVAYKKYKEQFGESYLEDDRDFEIKRNSIRSIDWSDQSLFDNRKEIQNDLQKSIRPMTPEVEKSLNLLSSLPDSRLVSMSGSGPSCFALFQNYDQANKVLKEHVNEFERAGLSAWACSMMSNGVELRNEFT.

Residue K18 is part of the active site. 103 to 113 (PIGAGLAGGST) contacts ATP. D145 is an active-site residue.

This sequence belongs to the GHMP kinase family. IspE subfamily.

The catalysed reaction is 4-CDP-2-C-methyl-D-erythritol + ATP = 4-CDP-2-C-methyl-D-erythritol 2-phosphate + ADP + H(+). The protein operates within isoprenoid biosynthesis; isopentenyl diphosphate biosynthesis via DXP pathway; isopentenyl diphosphate from 1-deoxy-D-xylulose 5-phosphate: step 3/6. Functionally, catalyzes the phosphorylation of the position 2 hydroxy group of 4-diphosphocytidyl-2C-methyl-D-erythritol. The chain is 4-diphosphocytidyl-2-C-methyl-D-erythritol kinase from Prochlorococcus marinus (strain NATL2A).